A 191-amino-acid polypeptide reads, in one-letter code: MAEPLLVVGLGNPGPTYAKTRHNLGFMVADVLAGRIGSAFKVHKKSGAEVVTGRLAGTSVVLAKPRCYMNESGRQVGPLAKFYSVPPQQIVVIHDELDIDFGRIRLKLGGGEGGHNGLRSVASALGTKNFHRVRIGVGRPPGRKDPAAFVLENFTAAERAEVPTIVEQAADATELLIAQGLEPAQNTVHAW.

Tyrosine 17 provides a ligand contact to tRNA. Histidine 22 functions as the Proton acceptor in the catalytic mechanism. TRNA-binding residues include tyrosine 68, asparagine 70, and asparagine 116.

Belongs to the PTH family. In terms of assembly, monomer.

The protein resides in the cytoplasm. The enzyme catalyses an N-acyl-L-alpha-aminoacyl-tRNA + H2O = an N-acyl-L-amino acid + a tRNA + H(+). Functionally, hydrolyzes ribosome-free peptidyl-tRNAs (with 1 or more amino acids incorporated), which drop off the ribosome during protein synthesis, or as a result of ribosome stalling. In terms of biological role, catalyzes the release of premature peptidyl moieties from peptidyl-tRNA molecules trapped in stalled 50S ribosomal subunits, and thus maintains levels of free tRNAs and 50S ribosomes. The sequence is that of Peptidyl-tRNA hydrolase from Mycolicibacterium smegmatis (strain ATCC 700084 / mc(2)155) (Mycobacterium smegmatis).